The following is a 304-amino-acid chain: D-alanine--D-alanine ligase (304 aa).

Residues 103–299 (KLIWQALGLP…FADLCIEILK (197 aa)) form the ATP-grasp domain. ATP is bound at residue 129–184 (EEKLGLPMFVKPAAEGSSVGVVKVKEKGRLKSVYEELKHLQGEIIAERFIGGGEYS). The Mg(2+) site is built by Asp-253, Glu-266, and Asn-268.

The protein belongs to the D-alanine--D-alanine ligase family. Mg(2+) serves as cofactor. The cofactor is Mn(2+).

The protein localises to the cytoplasm. It catalyses the reaction 2 D-alanine + ATP = D-alanyl-D-alanine + ADP + phosphate + H(+). Its pathway is cell wall biogenesis; peptidoglycan biosynthesis. Its function is as follows. Cell wall formation. This is D-alanine--D-alanine ligase from Neisseria gonorrhoeae (strain ATCC 700825 / FA 1090).